The sequence spans 254 residues: Cobalt transport protein CbiM (254 aa).

The N-terminal stretch at 1–31 (MKTILRPFTLLSRSIFLALFVLFLWSPDAHA) is a signal peptide. 6 consecutive transmembrane segments (helical) span residues 37–57 (GFLP…FLVV), 74–94 (LLLA…IPSV), 106–126 (LGAV…VLLF), 128–148 (ALLL…SMAI), 169–189 (WLAV…VTSL), and 212–232 (IFAL…VMVF).

Belongs to the CbiM family. In terms of assembly, forms an energy-coupling factor (ECF) transporter complex composed of an ATP-binding protein (A component, CbiO), a transmembrane protein (T component, CbiQ) and 2 possible substrate-capture proteins (S components, CbiM and CbiN) of unknown stoichimetry.

Its subcellular location is the cell inner membrane. The protein operates within cofactor biosynthesis; adenosylcobalamin biosynthesis. In terms of biological role, part of the energy-coupling factor (ECF) transporter complex CbiMNOQ involved in cobalt import. In Chlorobium limicola (strain DSM 245 / NBRC 103803 / 6330), this protein is Cobalt transport protein CbiM.